The primary structure comprises 520 residues: GMP synthase [glutamine-hydrolyzing] (520 aa).

In terms of domain architecture, Glutamine amidotransferase type-1 spans 12-205 (KIIVLDYGSQ…AISICGGRGD (194 aa)). C89 (nucleophile) is an active-site residue. Active-site residues include H179 and E181. In terms of domain architecture, GMPS ATP-PPase spans 206 to 395 (WSMDNFIDMQ…LGMPDEVVWR (190 aa)). 233-239 (SGGVDSS) contributes to the ATP binding site.

As to quaternary structure, homodimer.

The catalysed reaction is XMP + L-glutamine + ATP + H2O = GMP + L-glutamate + AMP + diphosphate + 2 H(+). The protein operates within purine metabolism; GMP biosynthesis; GMP from XMP (L-Gln route): step 1/1. Functionally, catalyzes the synthesis of GMP from XMP. This chain is GMP synthase [glutamine-hydrolyzing], found in Streptococcus equi subsp. equi (strain 4047).